We begin with the raw amino-acid sequence, 138 residues long: Large ribosomal subunit protein uL16 (138 aa).

It belongs to the universal ribosomal protein uL16 family. As to quaternary structure, part of the 50S ribosomal subunit.

Functionally, binds 23S rRNA and is also seen to make contacts with the A and possibly P site tRNAs. The chain is Large ribosomal subunit protein uL16 from Chlamydia muridarum (strain MoPn / Nigg).